The sequence spans 486 residues: Protein DETOXIFICATION 16 (486 aa).

12 consecutive transmembrane segments (helical) span residues 35 to 55 (GPLIAVSLLQFCLQVISVMFV), 68 to 88 (IATSFASVTGFSFLMGTASAL), 117 to 137 (LASIPLSIIWANTEHLLVFFG), 142 to 162 (IATLAGSYAKFMIPSIFAYGL), 179 to 199 (VVFCSGVTTSLHVLLCWVLVF), 207 to 227 (GAALANSISYWLNVVLLFCYV), 259 to 279 (ALMVCLEMWSFELLVLLSGLL), 288 to 308 (VLSICLNTSGTMWMIPFGLSG), 331 to 351 (RVVICIAVAESIVIGSVLILI), 365 to 385 (VVSYVASMMPILALGNFLDSL), 401 to 421 (IGAIINLGSYYLVGVPSGLLL), and 433 to 453 (WLGIICALVVQVFGLGLVTIF).

It belongs to the multi antimicrobial extrusion (MATE) (TC 2.A.66.1) family.

It localises to the membrane. The sequence is that of Protein DETOXIFICATION 16 from Arabidopsis thaliana (Mouse-ear cress).